A 250-amino-acid polypeptide reads, in one-letter code: Proteasome subunit alpha type-7-B (250 aa).

K62 is covalently cross-linked (Glycyl lysine isopeptide (Lys-Gly) (interchain with G-Cter in ubiquitin)).

The protein belongs to the peptidase T1A family. As to quaternary structure, component of the 20S core complex of the 26S proteasome. The 26S proteasome is composed of a core protease (CP), known as the 20S proteasome, capped at one or both ends by the 19S regulatory particle (RP/PA700). The 20S proteasome core is composed of 28 subunits that are arranged in four stacked rings, resulting in a barrel-shaped structure. The two end rings are each formed by seven alpha subunits, and the two central rings are each formed by seven beta subunits. The catalytic chamber with the active sites is on the inside of the barrel.

The protein localises to the cytoplasm. It is found in the nucleus. The proteasome is a multicatalytic proteinase complex which is characterized by its ability to cleave peptides with Arg, Phe, Tyr, Leu, and Glu adjacent to the leaving group at neutral or slightly basic pH. The proteasome has an ATP-dependent proteolytic activity. This Arabidopsis thaliana (Mouse-ear cress) protein is Proteasome subunit alpha type-7-B (PAD2).